Reading from the N-terminus, the 509-residue chain is Group 3 secretory phospholipase A2 (509 aa).

Residues methionine 1–glycine 19 form the signal peptide. The segment at glutamate 123–arginine 149 is disordered. A phospholipase A2-like region spans residues glycine 150 to threonine 291. Residues tryptophan 158, glycine 160, and glycine 162 each contribute to the Ca(2+) site. 4 disulfides stabilise this stretch: cysteine 159/cysteine 181, cysteine 180/cysteine 220, cysteine 187/cysteine 213, and cysteine 211/cysteine 244. N-linked (GlcNAc...) asparagine glycosylation occurs at asparagine 167. Residue histidine 184 is part of the active site. A Ca(2+)-binding site is contributed by aspartate 185. Aspartate 214 is an active-site residue. Asparagine 280 carries N-linked (GlcNAc...) asparagine glycosylation. Residues tryptophan 283–proline 354 are disordered. Residues serine 284 to serine 296 show a composition bias toward low complexity. Residues proline 302–serine 322 are compositionally biased toward basic residues. N-linked (GlcNAc...) asparagine glycans are attached at residues asparagine 325, asparagine 396, and asparagine 439. The segment at glutamine 458–glycine 482 is disordered. Over residues glutamine 463–glutamine 473 the composition is skewed to basic and acidic residues.

Belongs to the phospholipase A2 family. It depends on Ca(2+) as a cofactor. N-glycosylation does not affect the catalytic activity, but is required for proper secretion. A nonglycosylated form is observed in several cell types. Post-translationally, in several cell types, the N- and C-termini are cleaved off. In terms of tissue distribution, expressed in kidney, heart, liver, and skeletal muscle. Also present in placenta and peripheral blood leukocytes. Not detected in colon, thymus, spleen and small intestine. In lung, expressed in bronchial epithelial cells and alveolar macrophages, but scarcely detected in alveolar epithelium, arterial walls and interstitial fibroblasts (at protein level). In joints of osteoarthritis and rheumatoid arthritis, expressed in endothelial cells (at protein level). In normal heart, detected in some vessels. In myocardial tissues with acute infarction, expressed in vascular endothelial cells adjacent to cardiomyocytes and those in lesions with granulation. Expression in cardiomyocytes is scarce (at protein level). In uterus, breast and colon cancers, detected in tumor cells and neighboring microvascular endothelium, but not in normal glandular tissues (at protein level). Expressed in dermal resting mast cells (at protein level) and pulmonary mast cells. Expressed in neuronal fibers (at protein level). Highly expressed in dorsal root ganglia neurons (at protein level). Expressed in Purkinje cells in cerebellum (at protein level). In stomach is preferentially expressed in neuronal fibers and in microvascular endothelium. Sparsely expressed in normal aorta (at protein level). Highly expressed in macrophages and smooth muscle cells in aorta with atheroma.

It localises to the secreted. It is found in the cell membrane. The protein localises to the cytoplasm. Its subcellular location is the cytoskeleton. The protein resides in the microtubule organizing center. It localises to the centrosome. It is found in the centriole. The protein localises to the recycling endosome. The catalysed reaction is a 1,2-diacyl-sn-glycero-3-phosphocholine + H2O = a 1-acyl-sn-glycero-3-phosphocholine + a fatty acid + H(+). The enzyme catalyses 1-hexadecanoyl-2-(9Z,12Z-octadecadienoyl)-sn-glycero-3-phosphocholine + H2O = (9Z,12Z)-octadecadienoate + 1-hexadecanoyl-sn-glycero-3-phosphocholine + H(+). It catalyses the reaction 1-hexadecanoyl-2-(5Z,8Z,11Z,14Z-eicosatetraenoyl)-sn-glycero-3-phosphocholine + H2O = 1-hexadecanoyl-sn-glycero-3-phosphocholine + (5Z,8Z,11Z,14Z)-eicosatetraenoate + H(+). It carries out the reaction 1-hexadecanoyl-2-(9Z,12Z-octadecadienoyl)-sn-glycero-3-phosphoethanolamine + H2O = 1-hexadecanoyl-sn-glycero-3-phosphoethanolamine + (9Z,12Z)-octadecadienoate + H(+). The catalysed reaction is 1-hexadecanoyl-2-(5Z,8Z,11Z,14Z-eicosatetraenoyl)-sn-glycero-3-phosphoethanolamine + H2O = 1-hexadecanoyl-sn-glycero-3-phosphoethanolamine + (5Z,8Z,11Z,14Z)-eicosatetraenoate + H(+). Arachidonic acid release is markedly increased by glypican, a glycosylphosphatidylinositol-anchored heparan sulfate proteoglycan. Its function is as follows. Secretory calcium-dependent phospholipase A2 that primarily targets extracellular phospholipids. Hydrolyzes the ester bond of the fatty acyl group attached at sn-2 position of phospholipids without apparent head group selectivity. Contributes to phospholipid remodeling of low-density lipoprotein (LDL) and high-density lipoprotein (HDL) particles. Hydrolyzes LDL phospholipids releasing unsaturated fatty acids that regulate macrophage differentiation toward foam cells. May act in an autocrine and paracrine manner. Secreted by immature mast cells, acts on nearby fibroblasts upstream to PTDGS to synthesize prostaglandin D2 (PGD2), which in turn promotes mast cell maturation and degranulation via PTGDR. Secreted by epididymal epithelium, acts on immature sperm cells within the duct, modulating the degree of unsaturation of the fatty acyl components of phosphatidylcholines required for acrosome assembly and sperm cell motility. Facilitates the replacement of fatty acyl chains in phosphatidylcholines in sperm membranes from omega-6 and omega-9 to omega-3 polyunsaturated fatty acids (PUFAs). Coupled to lipoxygenase pathway, may process omega-6 PUFAs to generate oxygenated lipid mediators in the male reproductive tract. At pericentrosomal preciliary compartment, negatively regulates ciliogenesis likely by regulating endocytotic recycling of ciliary membrane protein. Coupled to cyclooxygenase pathway provides arachidonate to generate prostaglandin E2 (PGE2), a potent immunomodulatory lipid in inflammation and tumorigenesis. At colonic epithelial barrier, preferentially hydrolyzes phospholipids having arachidonate and docosahexaenoate at sn-2 position, contributing to the generation of oxygenated metabolites involved in colonic stem cell homeostasis. Releases C16:0 and C18:0 lysophosphatidylcholine subclasses from neuron plasma membranes and promotes neurite outgrowth and neuron survival. The polypeptide is Group 3 secretory phospholipase A2 (Homo sapiens (Human)).